A 106-amino-acid chain; its full sequence is Urease subunit beta (106 aa).

This sequence belongs to the urease beta subunit family. As to quaternary structure, heterotrimer of UreA (gamma), UreB (beta) and UreC (alpha) subunits. Three heterotrimers associate to form the active enzyme.

Its subcellular location is the cytoplasm. The enzyme catalyses urea + 2 H2O + H(+) = hydrogencarbonate + 2 NH4(+). It participates in nitrogen metabolism; urea degradation; CO(2) and NH(3) from urea (urease route): step 1/1. This Parasynechococcus marenigrum (strain WH8102) protein is Urease subunit beta.